A 140-amino-acid chain; its full sequence is L-fucose mutarotase (140 aa).

Histidine 22 serves as the catalytic Proton donor. Residues aspartate 30, arginine 107, and 129-131 (YGN) each bind substrate.

Belongs to the RbsD / FucU family. FucU mutarotase subfamily. As to quaternary structure, homodecamer.

Its subcellular location is the cytoplasm. It catalyses the reaction alpha-L-fucose = beta-L-fucose. Its pathway is carbohydrate metabolism; L-fucose metabolism. Its function is as follows. Involved in the anomeric conversion of L-fucose. This is L-fucose mutarotase from Klebsiella pneumoniae (strain 342).